The following is a 435-amino-acid chain: Protein phosphatase 2C homolog 2 (435 aa).

Positions 23–298 (IYGVSAMQGW…DNMTMIIIGL (276 aa)) constitute a PPM-type phosphatase domain. Residues aspartate 71, glycine 72, aspartate 240, and aspartate 289 each contribute to the Mn(2+) site. The segment at 366–435 (DQTEEDRDLP…TSGAPEKSTS (70 aa)) is disordered. Residues 381–392 (ELPDSARNEREG) are compositionally biased toward basic and acidic residues. The span at 409–418 (GSSASTSEST) shows a compositional bias: low complexity. Over residues 419-435 (VTPAGSSTSGAPEKSTS) the composition is skewed to polar residues.

The protein belongs to the PP2C family. Mg(2+) is required as a cofactor. It depends on Mn(2+) as a cofactor.

It is found in the cytoplasm. Its subcellular location is the nucleus. It carries out the reaction O-phospho-L-seryl-[protein] + H2O = L-seryl-[protein] + phosphate. The enzyme catalyses O-phospho-L-threonyl-[protein] + H2O = L-threonyl-[protein] + phosphate. In terms of biological role, dephosphorylating regulator for many key proteins. Dephosphorylates phosphoglycerate kinase pgk1 at least on 'Ser-203' to negatively regulate targeting of pgk1 to the mitochondrion, thereby negatively regulating production of acetyl-CoA and consequently aflatoxin biosynthesis. This chain is Protein phosphatase 2C homolog 2, found in Aspergillus flavus (strain ATCC 200026 / FGSC A1120 / IAM 13836 / NRRL 3357 / JCM 12722 / SRRC 167).